Here is a 1112-residue protein sequence, read N- to C-terminus: Nucleoporin NIC96 (1112 aa).

Disordered regions lie at residues M1 to T74, T101 to P136, and R303 to L350. Residues P12–P29 show a composition bias toward polar residues. Over residues G39–T74 the composition is skewed to low complexity. The span at T101–N118 shows a compositional bias: polar residues. A coiled-coil region spans residues T113–A135. Low complexity-rich tracts occupy residues Q119–A135 and T310–P319. Positions F394–R415 form a coiled coil.

The protein belongs to the nucleoporin interacting component (NIC) family. In terms of assembly, component of the nuclear pore complex (NPC). NPC constitutes the exclusive means of nucleocytoplasmic transport. NPCs allow the passive diffusion of ions and small molecules and the active, nuclear transport receptor-mediated bidirectional transport of macromolecules such as proteins, RNAs, ribonucleoparticles (RNPs), and ribosomal subunits across the nuclear envelope. Due to its 8-fold rotational symmetry, all subunits are present with 8 copies or multiples thereof. Part of a tetrameric NUP192-NUP170-NIC96-NUP53 or NUP188-NUP170-NIC96-NUP53 module.

It localises to the nucleus. The protein localises to the nuclear pore complex. It is found in the nucleus membrane. Functions as a component of the nuclear pore complex (NPC). NPC components, collectively referred to as nucleoporins (NUPs), can play the role of both NPC structural components and of docking or interaction partners for transiently associated nuclear transport factors. NIC96, which is localized to the core of the NPC and the distal ring of the nuclear basket, is required for de novo assembly of NPCs. This chain is Nucleoporin NIC96 (NIC96), found in Chaetomium thermophilum (strain DSM 1495 / CBS 144.50 / IMI 039719) (Thermochaetoides thermophila).